Here is a 255-residue protein sequence, read N- to C-terminus: DASH complex subunit SPC34 (255 aa).

Positions 53-81 (LFSVPPPPPRQTTLTAEQQQQQKPSNRRQ) are disordered. Over residues 63 to 81 (QTTLTAEQQQQQKPSNRRQ) the composition is skewed to polar residues. Residues 176-248 (LAYYEAKIAE…QARLRALDAD (73 aa)) adopt a coiled-coil conformation.

The protein belongs to the DASH complex SPC34 family. In terms of assembly, component of the DASH complex consisting of ASK1, DAD1, DAD2, DAD3, DAD4, DAM1, DUO1, HSK3, SPC19 and SPC34, with a stoichiometry of one copy of each subunit per complex. Multiple DASH complexes oligomerize to form a ring that encircles spindle microtubules and organizes the rod-like NDC80 complexes of the outer kinetochore of the outer kinetochore. DASH complex oligomerization strengthens microtubule attachments. On cytoplasmic microtubules, DASH complexes appear to form patches instead of rings.

It is found in the nucleus. The protein resides in the cytoplasm. It localises to the cytoskeleton. The protein localises to the spindle. Its subcellular location is the chromosome. It is found in the centromere. The protein resides in the kinetochore. Component of the DASH complex that connects microtubules with kinetochores and couples microtubule depolymerisation to chromosome movement; it is involved in retrieving kinetochores to the spindle poles before their re-orientation on the spindle in early mitosis and allows microtubule depolymerization to pull chromosomes apart and resist detachment during anaphase. Kinetochores, consisting of a centromere-associated inner segment and a microtubule-contacting outer segment, play a crucial role in chromosome segregation by mediating the physical connection between centromeric DNA and microtubules. Kinetochores also serve as an input point for the spindle assembly checkpoint, which delays anaphase until all chromosomes have bioriented on the mitotic spindle. The sequence is that of DASH complex subunit SPC34 from Chaetomium thermophilum (strain DSM 1495 / CBS 144.50 / IMI 039719) (Thermochaetoides thermophila).